A 437-amino-acid chain; its full sequence is GTPase Obg (437 aa).

The 159-residue stretch at 2-160 (SMFLDTAKIK…RNLELELKVL (159 aa)) folds into the Obg domain. In terms of domain architecture, OBG-type G spans 161–338 (ADVGLVGFPS…LLEATAELLE (178 aa)). GTP-binding positions include 167 to 174 (GFPSVGKS), 192 to 196 (FTTIV), 214 to 217 (DLPG), 284 to 287 (NKMD), and 319 to 321 (SGI). Residues serine 174 and threonine 194 each coordinate Mg(2+). Residues 359–437 (GFNPDEPEFA…IGKFEFEFVD (79 aa)) enclose the OCT domain.

This sequence belongs to the TRAFAC class OBG-HflX-like GTPase superfamily. OBG GTPase family. In terms of assembly, monomer. It depends on Mg(2+) as a cofactor.

It is found in the cytoplasm. In terms of biological role, an essential GTPase which binds GTP, GDP and possibly (p)ppGpp with moderate affinity, with high nucleotide exchange rates and a fairly low GTP hydrolysis rate. Plays a role in control of the cell cycle, stress response, ribosome biogenesis and in those bacteria that undergo differentiation, in morphogenesis control. This Streptococcus suis (strain 98HAH33) protein is GTPase Obg.